Consider the following 1019-residue polypeptide: Alpha-mannosidase At3g26720 (1019 aa).

The first 22 residues, 1–22, serve as a signal peptide directing secretion; the sequence is MAVKCFSLYLILAAIVIGGVTS. Zn(2+) is bound by residues H47 and D49. Residue N64 is glycosylated (N-linked (GlcNAc...) asparagine). A Zn(2+)-binding site is contributed by D169. 2 N-linked (GlcNAc...) asparagine glycosylation sites follow: N278 and N336. H410 serves as a coordination point for Zn(2+). A disulfide bridge connects residues C466 and C474. Residues N470, N638, N730, and N820 are each glycosylated (N-linked (GlcNAc...) asparagine). A disulfide bridge links C824 with C829.

This sequence belongs to the glycosyl hydrolase 38 family. In terms of assembly, homodimer. It depends on Zn(2+) as a cofactor.

It catalyses the reaction Hydrolysis of terminal, non-reducing alpha-D-mannose residues in alpha-D-mannosides.. Liberates mannose from p-nitrophenyl-alpha-D-mannoside in vitro. The sequence is that of Alpha-mannosidase At3g26720 from Arabidopsis thaliana (Mouse-ear cress).